The sequence spans 329 residues: CDP-6-deoxy-L-threo-D-glycero-4-hexulose-3-dehydrase reductase (329 aa).

One can recognise a 2Fe-2S ferredoxin-type domain in the interval 2–93 (SLNVKLHPSG…ELDVNYYPEL (92 aa)). Residues C37, C42, C45, and C75 each contribute to the [2Fe-2S] cluster site. Residues 98–197 (KKTYPCKLDS…EGPQGTFFVR (100 aa)) enclose the FAD-binding FR-type domain.

In terms of assembly, monomer.

It functions in the pathway nucleotide-sugar biosynthesis; CDP-ascarylose biosynthesis. Its pathway is bacterial outer membrane biogenesis; lipopolysaccharide biosynthesis. Participates in the conversion of CDP-6-deoxy-D-glycero-L-threo-4-hexulose to 3,6-dideoxy-D-glycero-D-glycero-4-hexulose together with CDP-6-deoxy-D-glycero-L-threo-4-hexulose-3-dehydrase (E1) in two consecutive steps. The detailed mechanism of E3 is not yet resolved. This Yersinia pestis protein is CDP-6-deoxy-L-threo-D-glycero-4-hexulose-3-dehydrase reductase (ascD).